The chain runs to 388 residues: 1-deoxy-D-xylulose 5-phosphate reductoisomerase (388 aa).

Positions 13, 14, 15, 16, 40, 41, and 124 each coordinate NADPH. K125 is a 1-deoxy-D-xylulose 5-phosphate binding site. E126 is a binding site for NADPH. D150 serves as a coordination point for Mn(2+). Residues S151, E152, S176, and H199 each contribute to the 1-deoxy-D-xylulose 5-phosphate site. E152 is a Mn(2+) binding site. G205 contacts NADPH. Residues S212, N217, K218, and E221 each coordinate 1-deoxy-D-xylulose 5-phosphate. Residue E221 participates in Mn(2+) binding.

Belongs to the DXR family. In terms of assembly, homodimer. Requires Mg(2+) as cofactor. The cofactor is Mn(2+). Co(2+) is required as a cofactor.

It catalyses the reaction 2-C-methyl-D-erythritol 4-phosphate + NADP(+) = 1-deoxy-D-xylulose 5-phosphate + NADPH + H(+). It functions in the pathway isoprenoid biosynthesis; isopentenyl diphosphate biosynthesis via DXP pathway; isopentenyl diphosphate from 1-deoxy-D-xylulose 5-phosphate: step 1/6. Its activity is regulated as follows. Competitively inhibited by the antibiotic fosmidomycin. In terms of biological role, catalyzes the NADPH-dependent rearrangement and reduction of 1-deoxy-D-xylulose-5-phosphate (DXP) to 2-C-methyl-D-erythritol 4-phosphate (MEP). Cannot use NADH instead of NADPH as the reducing agent. This chain is 1-deoxy-D-xylulose 5-phosphate reductoisomerase, found in Zymomonas mobilis subsp. mobilis (strain ATCC 31821 / ZM4 / CP4).